We begin with the raw amino-acid sequence, 441 residues long: Putative collagenous domain-containing protein R238 (441 aa).

One can recognise a Collagen-like domain in the interval 164 to 199 (GCKGEKGIKGELGPKGNTGQKGDIGSKGDRGDKGEP). A disordered region spans residues 171–198 (IKGELGPKGNTGQKGDIGSKGDRGDKGE). The segment covering 187-198 (IGSKGDRGDKGE) has biased composition (basic and acidic residues).

The polypeptide is Putative collagenous domain-containing protein R238 (Acanthamoeba polyphaga (Amoeba)).